A 504-amino-acid chain; its full sequence is uncharacterized protein (504 aa).

The segment at G431–E483 is disordered.

This sequence belongs to the CBF/MAK21 family.

This is an uncharacterized protein from Caenorhabditis elegans.